The chain runs to 264 residues: Thymidylate synthase (264 aa).

Residues R21 and 126–127 each bind dUMP; that span reads RR. C146 acts as the Nucleophile in catalysis. Residues 166 to 169, N177, and 207 to 209 each bind dUMP; these read RSAD and HLY. (6R)-5,10-methylene-5,6,7,8-tetrahydrofolate is bound at residue D169. A263 provides a ligand contact to (6R)-5,10-methylene-5,6,7,8-tetrahydrofolate.

Belongs to the thymidylate synthase family. Bacterial-type ThyA subfamily. Homodimer.

It localises to the cytoplasm. It catalyses the reaction dUMP + (6R)-5,10-methylene-5,6,7,8-tetrahydrofolate = 7,8-dihydrofolate + dTMP. Its pathway is pyrimidine metabolism; dTTP biosynthesis. Functionally, catalyzes the reductive methylation of 2'-deoxyuridine-5'-monophosphate (dUMP) to 2'-deoxythymidine-5'-monophosphate (dTMP) while utilizing 5,10-methylenetetrahydrofolate (mTHF) as the methyl donor and reductant in the reaction, yielding dihydrofolate (DHF) as a by-product. This enzymatic reaction provides an intracellular de novo source of dTMP, an essential precursor for DNA biosynthesis. This Rhodopseudomonas palustris (strain BisB5) protein is Thymidylate synthase.